The following is a 257-amino-acid chain: MSWSAAQYAKFEDERTRPARDLLAQVPDLPAGPAFDLGCGPGNSTELILARFPGSPLTGIDSDDDMLSAARTRLPDLRFERGDLAAWTPPAESALFFANAVFQWLPEHVTLFERLILALAPGGTLAVQMPDNLDEPTHLLMEETAEESAFAPAFAGRTIRRRSLPSPATYVERLASKEVRVDVWHTVYYHQLANANAIVEWVKGTGLRPYLDALPTTQRAGYLAAYAEKIRKAYPAMKNGRVLLRFPRLFIVATRNL.

This sequence belongs to the methyltransferase superfamily. Tam family.

It is found in the cytoplasm. It carries out the reaction trans-aconitate + S-adenosyl-L-methionine = (E)-3-(methoxycarbonyl)pent-2-enedioate + S-adenosyl-L-homocysteine. Catalyzes the S-adenosylmethionine monomethyl esterification of trans-aconitate. This is Trans-aconitate 2-methyltransferase from Rhizobium meliloti (strain 1021) (Ensifer meliloti).